We begin with the raw amino-acid sequence, 57 residues long: uncharacterized protein (57 aa).

The tract at residues histidine 31–phenylalanine 57 is disordered. Residues glutamine 33–phenylalanine 57 show a composition bias toward polar residues.

This is an uncharacterized protein from Invertebrate iridescent virus 6 (IIV-6).